The primary structure comprises 549 residues: Glutamyl-tRNA(Gln) amidotransferase subunit B, chloroplastic/mitochondrial (549 aa).

It belongs to the GatB/GatE family. GatB subfamily. As to quaternary structure, subunit of the heterotrimeric GatCAB amidotransferase (AdT) complex, composed of A, B and C subunits.

The protein resides in the mitochondrion. The protein localises to the plastid. Its subcellular location is the chloroplast. The enzyme catalyses L-glutamyl-tRNA(Gln) + L-glutamine + ATP + H2O = L-glutaminyl-tRNA(Gln) + L-glutamate + ADP + phosphate + H(+). Allows the formation of correctly charged Gln-tRNA(Gln) through the transamidation of misacylated Glu-tRNA(Gln) in chloroplasts and mitochondria. The reaction takes place in the presence of glutamine and ATP through an activated gamma-phospho-Glu-tRNA(Gln). The polypeptide is Glutamyl-tRNA(Gln) amidotransferase subunit B, chloroplastic/mitochondrial (Ricinus communis (Castor bean)).